Reading from the N-terminus, the 174-residue chain is Small ribosomal subunit protein uS5 (174 aa).

Residues 17 to 80 (WQERVVQIRR…ADGKKHLIDV (64 aa)) enclose the S5 DRBM domain.

It belongs to the universal ribosomal protein uS5 family. In terms of assembly, part of the 30S ribosomal subunit. Contacts proteins S4 and S8.

Functionally, with S4 and S12 plays an important role in translational accuracy. Located at the back of the 30S subunit body where it stabilizes the conformation of the head with respect to the body. This is Small ribosomal subunit protein uS5 from Thermosynechococcus vestitus (strain NIES-2133 / IAM M-273 / BP-1).